Reading from the N-terminus, the 499-residue chain is Trichoplein keratin filament-binding protein (499 aa).

A coiled-coil region spans residues 12–38 (SRVRTLEQQLVRQREQEARLRRQWEQH). Disordered stretches follow at residues 46 to 78 (DVRS…EEKQ) and 169 to 209 (VQQQ…EEEN). Residues 50-67 (SKQAQWSSRQSFHRSMSA) show a composition bias toward polar residues. Composition is skewed to basic and acidic residues over residues 69-78 (QRDRMREEKQ) and 172-209 (QEKK…EEEN). Coiled coils occupy residues 71–133 (DRMR…ERRK), 168–306 (QVQQ…ALLE), and 359–484 (WEKR…MIRQ). Positions 74-499 (REEKQRKLEE…IHSRPRSAWT (426 aa)) are interaction with keratin proteins. Residues 260–426 (KMMEESRRKT…RLTLRLEKEQ (167 aa)) are trichohyalin/plectin homology domain.

This sequence belongs to the TCHP family.

The protein localises to the cytoplasm. It is found in the cytoskeleton. It localises to the microtubule organizing center. Its subcellular location is the centrosome. In terms of biological role, may act as a 'capping' or 'branching' protein for keratin filaments in the cell periphery. May regulate K8/K18 filament and desmosome organization mainly at the apical or peripheral regions of simple epithelial cells. The sequence is that of Trichoplein keratin filament-binding protein from Danio rerio (Zebrafish).